The chain runs to 119 residues: Large ribosomal subunit protein uL18 (119 aa).

It belongs to the universal ribosomal protein uL18 family. As to quaternary structure, part of the 50S ribosomal subunit; part of the 5S rRNA/L5/L18/L25 subcomplex. Contacts the 5S and 23S rRNAs.

Functionally, this is one of the proteins that bind and probably mediate the attachment of the 5S RNA into the large ribosomal subunit, where it forms part of the central protuberance. The protein is Large ribosomal subunit protein uL18 of Roseobacter denitrificans (strain ATCC 33942 / OCh 114) (Erythrobacter sp. (strain OCh 114)).